Consider the following 137-residue polypeptide: MLMPKRVKYRKMHRGRMKGKAKGGVSLAFGKYGLQALEPVWINSNQIEAARIALARSIKKGGKVWIRIFPDKPVTKKPAETRMGKGKGDPQFWVAVVKPGRVMFEMEGIPETEAKKALRLASNKLPIHTKILVRADI.

It belongs to the universal ribosomal protein uL16 family. Part of the 50S ribosomal subunit.

Functionally, binds 23S rRNA and is also seen to make contacts with the A and possibly P site tRNAs. This is Large ribosomal subunit protein uL16 from Endomicrobium trichonymphae.